Here is a 231-residue protein sequence, read N- to C-terminus: tRNA (guanine-N(7)-)-methyltransferase (231 aa).

Residues glutamate 62, glutamate 87, aspartate 114, and aspartate 136 each coordinate S-adenosyl-L-methionine. The active site involves aspartate 136. Substrate is bound by residues lysine 140, aspartate 172, and 210–213 (TRYE).

It belongs to the class I-like SAM-binding methyltransferase superfamily. TrmB family.

The enzyme catalyses guanosine(46) in tRNA + S-adenosyl-L-methionine = N(7)-methylguanosine(46) in tRNA + S-adenosyl-L-homocysteine. The protein operates within tRNA modification; N(7)-methylguanine-tRNA biosynthesis. Its function is as follows. Catalyzes the formation of N(7)-methylguanine at position 46 (m7G46) in tRNA. The polypeptide is tRNA (guanine-N(7)-)-methyltransferase (Zymomonas mobilis subsp. mobilis (strain ATCC 31821 / ZM4 / CP4)).